The sequence spans 340 residues: Adenosine deaminase (340 aa).

Zn(2+) contacts are provided by H15 and H17. Positions 17, 19, and 172 each coordinate substrate. H199 lines the Zn(2+) pocket. The active-site Proton donor is the E202. D279 contributes to the Zn(2+) binding site.

Belongs to the metallo-dependent hydrolases superfamily. Adenosine and AMP deaminases family. Adenosine deaminase subfamily. The cofactor is Zn(2+).

It catalyses the reaction adenosine + H2O + H(+) = inosine + NH4(+). The catalysed reaction is 2'-deoxyadenosine + H2O + H(+) = 2'-deoxyinosine + NH4(+). Its function is as follows. Catalyzes the hydrolytic deamination of adenosine and 2-deoxyadenosine. This Streptococcus agalactiae serotype Ia (strain ATCC 27591 / A909 / CDC SS700) protein is Adenosine deaminase.